The following is a 132-amino-acid chain: MYVIDPIADMLTRIRNANNARHEIVDIPASKMKKAIAQILLEEGFIKDYEIIDDGKNGIIRIRLKYGPNKERAITGLKRISKPGRRVYAGKDELPRVLGGLGIAIISTSKGIMTDKKARKEGVGGEVLCYVW.

This sequence belongs to the universal ribosomal protein uS8 family. Part of the 30S ribosomal subunit. Contacts proteins S5 and S12.

Functionally, one of the primary rRNA binding proteins, it binds directly to 16S rRNA central domain where it helps coordinate assembly of the platform of the 30S subunit. The polypeptide is Small ribosomal subunit protein uS8 (Caldicellulosiruptor bescii (strain ATCC BAA-1888 / DSM 6725 / KCTC 15123 / Z-1320) (Anaerocellum thermophilum)).